A 123-amino-acid polypeptide reads, in one-letter code: Small ribosomal subunit protein bS16 (123 aa).

The tract at residues 79–123 (AGIAKRPSRNNPTKGEPGKKAQERLALAKQAEEEAAAKAAEAASE) is disordered.

It belongs to the bacterial ribosomal protein bS16 family.

The sequence is that of Small ribosomal subunit protein bS16 from Brucella melitensis biotype 2 (strain ATCC 23457).